Consider the following 286-residue polypeptide: MADDSELYPRFFKVFLVESASESLMIPLPFMAFLADPLPKTVKLQGLGGKLWTVSLKKISGAAYLTRGWPKFAEEHELKNGEFMTFVYDGHRTFEVSVFDRWGSKEVRAEIQAIPLSDSDSDSVVEDEKDSTDVVEDDDDEDEDEDEDDDGSFDEDEEISQSLYPIDEETATDAAVFEGNLDVEALTNPHFPTTLKNRIYELLIPANVVKDNNLEFGSSIKYIDGEGTLVGLRGKWADKRVCFKGWDRICRRNRLKKHQDTVECELLHDDQKMVHSIRVHVLRRDA.

The segment at residues 9-102 is a DNA-binding region (TF-B3); sequence PRFFKVFLVE…TFEVSVFDRW (94 aa). Residues 117-161 form a disordered region; that stretch reads SDSDSDSVVEDEKDSTDVVEDDDDEDEDEDEDDDGSFDEDEEISQ. Over residues 119-159 the composition is skewed to acidic residues; that stretch reads SDSDSVVEDEKDSTDVVEDDDDEDEDEDEDDDGSFDEDEEI.

It is found in the nucleus. In Arabidopsis thaliana (Mouse-ear cress), this protein is B3 domain-containing protein REM20 (REM20).